The primary structure comprises 228 residues: Phosphoribosylformylglycinamidine synthase subunit PurQ (228 aa).

The Glutamine amidotransferase type-1 domain maps to 4-226 (AVVVFPGSNC…VNYWRETHVV (223 aa)). Cysteine 86 serves as the catalytic Nucleophile. Active-site residues include histidine 195 and glutamate 197.

Part of the FGAM synthase complex composed of 1 PurL, 1 PurQ and 2 PurS subunits.

Its subcellular location is the cytoplasm. It catalyses the reaction N(2)-formyl-N(1)-(5-phospho-beta-D-ribosyl)glycinamide + L-glutamine + ATP + H2O = 2-formamido-N(1)-(5-O-phospho-beta-D-ribosyl)acetamidine + L-glutamate + ADP + phosphate + H(+). It carries out the reaction L-glutamine + H2O = L-glutamate + NH4(+). It functions in the pathway purine metabolism; IMP biosynthesis via de novo pathway; 5-amino-1-(5-phospho-D-ribosyl)imidazole from N(2)-formyl-N(1)-(5-phospho-D-ribosyl)glycinamide: step 1/2. Its function is as follows. Part of the phosphoribosylformylglycinamidine synthase complex involved in the purines biosynthetic pathway. Catalyzes the ATP-dependent conversion of formylglycinamide ribonucleotide (FGAR) and glutamine to yield formylglycinamidine ribonucleotide (FGAM) and glutamate. The FGAM synthase complex is composed of three subunits. PurQ produces an ammonia molecule by converting glutamine to glutamate. PurL transfers the ammonia molecule to FGAR to form FGAM in an ATP-dependent manner. PurS interacts with PurQ and PurL and is thought to assist in the transfer of the ammonia molecule from PurQ to PurL. The sequence is that of Phosphoribosylformylglycinamidine synthase subunit PurQ from Geobacillus kaustophilus (strain HTA426).